A 594-amino-acid chain; its full sequence is MSPAEAAPRKKHVRFARMEGDVDHDDQEENTLFDKQKDVKEGLKSVLKGGKGILSQGSGQVDVVRPGRSKTGTCWRWLVSLALCASFLGLGMAISVLGPTFEDLAINVNKNISNLSYIFVGRASGYIGGSLLGGILFDFVNPHLLLGFALLTTAFGMSGTPFCKKAWVLTVLMSSVGVSMGVLDTGGNVLILNTWGEQAGPHMQALHFSFAAGAFASPIIAKLLFGHHNSSTNTSLMSGHASKTIDAVLPFSHPKGTSTIDLPWMWAYIVIGAFVLLVSLLFFSLYFCISTNSNRTKTASGKQQFSKHHNTLIILLSMFFFFYVGSEVAYGSFIFTYGKDYVHMEETEAAGLNSLFWGAFAAGRGLAIFFAACLHPGTLILLSLVGTTVSSLLLCLFSQNYPMLWACTALYGISMSTTFPSGISWVEQYTTVTGRSAAIFVVGAALGEMVLPALLGFLLGHVQNYPLLMYLTLCTATFTSILFPVLYKLASPEGNVTLRKSSGKCTIKDADDSEYRQALLENMEEQEENESEADLCNDADFEVIEMDDASLLSSPKSSPPADVAASVPDVHLVASPLSEPNMLSFSTDSPRSKL.

11 helical membrane-spanning segments follow: residues 77–97 (WLVS…ISVL), 115–137 (LSYI…GILF), 144–161 (LLLG…SGTP), 166–186 (AWVL…LDTG), 205–225 (ALHF…KLLF), 269–289 (IVIG…YFCI), 311–331 (TLII…VAYG), 349–371 (AAGL…IFFA), 393–413 (LLCL…LYGI), 439–459 (IFVV…GFLL), and 467–487 (LLMY…PVLY).

This sequence belongs to the major facilitator superfamily.

The protein resides in the apical cell membrane. Its function is as follows. May function as a sodium-dependent glucose transporter. Potential channels for urea in the inner medulla of kidney. This chain is Sodium-dependent glucose transporter 1 (mfsd4b), found in Danio rerio (Zebrafish).